Here is a 563-residue protein sequence, read N- to C-terminus: Heat shock 70 kDa protein 8 (563 aa).

The interval 1–25 is disordered; sequence MAEAAYTVASDSENTGEEKSSSSPS. Ala-2 carries the post-translational modification N-acetylalanine.

Belongs to the heat shock protein 70 (TC 1.A.33) family. DnaK subfamily.

In cooperation with other chaperones, Hsp70s are key components that facilitate folding of de novo synthesized proteins, assist translocation of precursor proteins into organelles, and are responsible for degradation of damaged protein under stress conditions. This chain is Heat shock 70 kDa protein 8 (HSP70-8), found in Arabidopsis thaliana (Mouse-ear cress).